A 363-amino-acid polypeptide reads, in one-letter code: Protein Wnt-5b (363 aa).

The first 21 residues, 1-21 (MDVRMNQGHLLLAVTLIVCNS), serve as a signal peptide directing secretion. An intrachain disulfide couples C87 to C98. N-linked (GlcNAc...) asparagine glycans are attached at residues N97 and N103. Cystine bridges form between C137–C145, C147–C165, C221–C235, C223–C230, C292–C323, C308–C318, C322–C362, C338–C353, C340–C350, and C345–C346. The O-palmitoleoyl serine; by PORCN moiety is linked to residue S227. N-linked (GlcNAc...) asparagine glycans are attached at residues N295 and N309.

Belongs to the Wnt family. In terms of processing, palmitoleoylation is required for efficient binding to frizzled receptors. Depalmitoleoylation leads to Wnt signaling pathway inhibition.

It localises to the secreted. It is found in the extracellular space. The protein resides in the extracellular matrix. In terms of biological role, ligand for members of the frizzled family of seven transmembrane receptors. Can activate or inhibit canonical Wnt signaling, depending on receptor context. Required during embryogenesis for extension of the primary anterior-posterior axis. Regulates convergent extension movements and hypaxial myogenesis during gastrulation via activation of non-canonical Wnt signaling. This Danio rerio (Zebrafish) protein is Protein Wnt-5b (wnt5b).